The primary structure comprises 1253 residues: Structural polyprotein (1253 aa).

The segment at 43–77 is host transcription inhibition; sequence VQAQQMQQLISAVSALTTKQNGKAPKKPKKKPQKA. Residues 58–110 form a disordered region; it reads LTTKQNGKAPKKPKKKPQKAKAKKNEQQKKNENKKPPPKQKNPAKKKKPGKRE. Positions 66–79 are enriched in basic residues; sequence APKKPKKKPQKAKA. Positions 70–106 match the Nuclear localization signal motif; the sequence is PKKKPQKAKAKKNEQQKKNENKKPPPKQKNPAKKKKP. Positions 80–92 are enriched in basic and acidic residues; the sequence is KKNEQQKKNENKK. A binding to the viral RNA region spans residues 90–121; it reads NKKPPPKQKNPAKKKKPGKRERMCMKIENDCI. Residues 93 to 108 are compositionally biased toward basic residues; that stretch reads PPPKQKNPAKKKKPGK. The interval 106 to 120 is ribosome-binding; that stretch reads PGKRERMCMKIENDC. Cys-120 and Cys-135 form a disulfide bridge. In terms of domain architecture, Peptidase S3 spans 120-268; the sequence is CIFEVKLDGK…RYTPEGTEEW (149 aa). His-146 acts as the Charge relay system in catalysis. Residues 151-161 carry the Nuclear export signal motif; the sequence is IDNPDLAKLTY. An interaction with spike glycoprotein E2 region spans residues 162-167; the sequence is KKSSKY. Asp-168 serves as the catalytic Charge relay system. A dimerization of the capsid protein region spans residues 190-200; it reads PEGHYNWHHGA. The active-site Charge relay system is Ser-220. The dimerization of the capsid protein stretch occupies residues 226 to 230; the sequence is DNKGR. Residues 269-280 form a functions as an uncleaved signal peptide for the precursor of protein E3/E2 region; it reads SAALMMCVLANV. 3 disulfide bridges follow: Cys-275–Cys-284, Cys-289–Cys-293, and Cys-292–Cys-324. N-linked (GlcNAc...) asparagine; by host glycosylation occurs at Asn-279. Asn-325 carries an N-linked (GlcNAc...) asparagine; by host glycan. At 333-694 the chain is on the extracellular side; sequence SVTKHFNVYK…EIILYYYGLY (362 aa). 6 disulfide bridges follow: Cys-351-Cys-457, Cys-354-Cys-360, Cys-423-Cys-437, Cys-485-Cys-597, Cys-533-Cys-557, and Cys-535-Cys-552. Interaction with host Mxra8 receptor stretches follow at residues 358–361 and 394–396; these read QFCY and HEH. Positions 516-519 are interaction with host Mxra8 receptor; that stretch reads QSGN. An N-linked (GlcNAc...) asparagine; by host glycan is attached at Asn-532. Residues 548–554 form an interaction with host Mxra8 receptor region; sequence TINSCKI. The N-linked (GlcNAc...) asparagine; by host glycan is linked to Asn-594. The helical transmembrane segment at 695 to 715 threads the bilayer; that stretch reads PAATIAAVSAAGLAVVLSLLA. Topologically, residues 716–754 are cytoplasmic; it reads SCYMFATARRKCLTPYALTPGAVVPVTLGVLCCAPRAHA. A lipid anchor (S-stearoyl cysteine; by host) is attached at Cys-717. Residues 722-726 form an interaction with the capsid protein region; it reads TARRK. The S-stearoyl cysteine; by host moiety is linked to residue Cys-727. The transient transmembrane before p62-6K protein processing stretch occupies residues 727 to 747; sequence CLTPYALTPGAVVPVTLGVLC. Cysteines 727 and 748 form a disulfide. 2 S-palmitoyl cysteine; by host lipidation sites follow: Cys-747 and Cys-748. Topologically, residues 755–769 are extracellular; sequence ASFAESMAYLWDENQ. Asn-768 carries an N-linked (GlcNAc...) asparagine; by host glycan. A helical transmembrane segment spans residues 770–790; sequence TLFWLELATPLAAIIILVCCL. Residues 791 to 792 are Cytoplasmic-facing; sequence KN. A helical transmembrane segment spans residues 793–813; the sequence is LLCCCKPLSFLVLVSLGTPVV. Extracellular segments lie at residues 814 to 815 and 826 to 1227; these read KS and VGFP…WVQR. Cystine bridges form between Cys-864–Cys-929, Cys-877–Cys-909, Cys-878–Cys-911, and Cys-883–Cys-893. Residues 899-916 are E1 fusion peptide loop; that stretch reads VYPFMWGGAYCFCDTENT. 2 N-linked (GlcNAc...) asparagine; by host glycosylation sites follow: Asn-956 and Asn-1085. Disulfide bonds link Cys-1074-Cys-1086, Cys-1116-Cys-1191, Cys-1121-Cys-1195, and Cys-1143-Cys-1185. Residues 1228–1248 form a helical membrane-spanning segment; the sequence is VAGGLGGLTLAAVAVLILVTC. The S-palmitoyl cysteine; by host moiety is linked to residue Cys-1248. Residues 1249–1253 lie on the Cytoplasmic side of the membrane; the sequence is VTMRR.

Homodimer. Homomultimer. Interacts with host karyopherin KPNA4; this interaction allows the nuclear import of the viral capsid protein. Interacts with spike glycoprotein E2. Interacts with host IRAK1; the interaction leads to inhibition of IRAK1-dependent signaling. In terms of assembly, the precursor of protein E3/E2 and E1 form a heterodimer shortly after synthesis. As to quaternary structure, interacts with spike glycoprotein E2. The precursor of protein E3/E2 and E1 form a heterodimer shortly after synthesis. Processing of the precursor of protein E3/E2 into E2 and E3 results in a heterodimer of the spike glycoproteins E2 and E1. Spike at virion surface are constituted of a trimer of E2-E1 heterodimers. After target cell attachment and endocytosis, E1 change conformation to form homotrimers. Interacts with 6K protein. E1/E2 heterodimer interacts with host LDLR. Interacts with spike glycoprotein E1. Processing of the precursor of protein E3/E2 into E2 and E3 results in a heterodimer of the spike glycoproteins E2 and E1. Spike at virion surface are constituted of a trimer of E2-E1 heterodimers. Interacts with 6K protein. Interacts with host MXRA8; this interaction mediates virus entry. In terms of assembly, oligomer. Interacts with spike glycoprotein E1. Interacts with spike glycoprotein E2. In terms of processing, structural polyprotein: Specific enzymatic cleavages in vivo yield mature proteins. Capsid protein is auto-cleaved during polyprotein translation, unmasking a signal peptide at the N-terminus of the precursor of E3/E2. The remaining polyprotein is then targeted to the host endoplasmic reticulum, where host signal peptidase cleaves it into pE2, 6K and E1 proteins. pE2 is further processed to mature E3 and E2 by host furin in trans-Golgi vesicle. Palmitoylated via thioester bonds. These palmitoylations may induce disruption of the C-terminus transmembrane. This would result in the reorientation of E2 C-terminus from lumenal to cytoplasmic side. Post-translationally, N-glycosylated. In terms of processing, palmitoylated via thioester bonds.

The protein localises to the virion. Its subcellular location is the host cytoplasm. It is found in the host cell membrane. It localises to the host nucleus. The protein resides in the virion membrane. The protein localises to the host Golgi apparatus. Its subcellular location is the host trans-Golgi network. It is found in the host endoplasmic reticulum. The catalysed reaction is Autocatalytic release of the core protein from the N-terminus of the togavirus structural polyprotein by hydrolysis of a -Trp-|-Ser- bond.. Its function is as follows. Forms an icosahedral capsid with a T=4 symmetry composed of 240 copies of the capsid protein surrounded by a lipid membrane through which penetrate 80 spikes composed of trimers of E1-E2 heterodimers. The capsid protein binds to the viral RNA genome at a site adjacent to a ribosome binding site for viral genome translation following genome release. Possesses a protease activity that results in its autocatalytic cleavage from the nascent structural protein. Following its self-cleavage, the capsid protein transiently associates with ribosomes, and within several minutes the protein binds to viral RNA and rapidly assembles into icosahedric core particles. The resulting nucleocapsid eventually associates with the cytoplasmic domain of the spike glycoprotein E2 at the cell membrane, leading to budding and formation of mature virions. In case of infection, new virions attach to target cells and after clathrin-mediated endocytosis their membrane fuses with the host endosomal membrane. This leads to the release of the nucleocapsid into the cytoplasm, followed by an uncoating event necessary for the genomic RNA to become accessible. The uncoating might be triggered by the interaction of capsid proteins with ribosomes. Binding of ribosomes would release the genomic RNA since the same region is genomic RNA-binding and ribosome-binding. Specifically inhibits interleukin-1 receptor-associated kinase 1/IRAK1-dependent signaling during viral entry, representing a means by which the alphaviruses may evade innate immune detection and activation prior to viral gene expression. In terms of biological role, provides the signal sequence for the translocation of the precursor of protein E3/E2 to the host endoplasmic reticulum. Furin-cleaved E3 remains associated with spike glycoprotein E1 and mediates pH protection of the latter during the transport via the secretory pathway. After virion release from the host cell, the assembly protein E3 is gradually released in the extracellular space. Functionally, plays a role in viral attachment to target host cell, by binding to the cell receptor MXRA8. The host LDLR may also act as a cell receptor for viral entry. Synthesized as a p62 precursor which is processed by furin at the cell membrane just before virion budding, giving rise to E2-E1 heterodimer. The p62-E1 heterodimer is stable, whereas E2-E1 is unstable and dissociate at low pH. p62 is processed at the last step, presumably to avoid E1 fusion activation before its final export to cell surface. E2 C-terminus contains a transitory transmembrane that would be disrupted by palmitoylation, resulting in reorientation of the C-terminal tail from lumenal to cytoplasmic side. This step is critical since E2 C-terminus is involved in budding by interacting with capsid proteins. This release of E2 C-terminus in cytoplasm occurs lately in protein export, and precludes premature assembly of particles at the endoplasmic reticulum membrane. Acts as a viroporin that participates in virus glycoprotein processing and transport to the plasma membrane, cell permeabilization and budding of viral particles. Disrupts the calcium homeostasis of the cell, probably at the endoplasmic reticulum level. This leads to cytoplasmic calcium elevation. Because of its lipophilic properties, the 6K protein is postulated to influence the selection of lipids that interact with the transmembrane domains of the glycoproteins, which, in turn, affects the deformability of the bilayer required for the extreme curvature that occurs as budding proceeds. Present in low amount in virions, about 3% compared to viral glycoproteins. Its function is as follows. Class II viral fusion protein. Fusion activity is inactive as long as E1 is bound to E2 in mature virion. After virus attachment to target cell via host MXRA8 and endocytosis, acidification of the endosome induce dissociation of E1/E2 heterodimer and concomitant trimerization of the E1 subunits. This E1 trimer is fusion active, and promotes release of viral nucleocapsid in cytoplasm after endosome and viral membrane fusion. Efficient fusion requires the presence of cholesterol and sphingolipid in the target membrane. The chain is Structural polyprotein from Aedes vexans (Inland floodwater mosquito).